A 442-amino-acid chain; its full sequence is MSELRIPIEQWQSLSSAEQTQRLARPGRAQAESLREKVAVILSDVRDNGERAVLNYTRQFDNPDATSLRMSDEQVEAAVASLDDKVKRAIDTAYQTIYRFHEAQRPQDLSIETAPGVQCELRYAPLDAVGLYIPGGSATLPSTALMLGVPAQIAGCQRVVMVSPPNKQGELPAALLYAAKRCGVTDILLCGGAQAIGALAYGIESSPAVGKVFGPGNSFVTEAKQQVSQNDSGCAMDLPAGPSELLVIADDSANPAYVAADLLSQAEHGPDSQVILLTPSMTVAENVRQELMAQCAQLSRADIAEQALQASRLLVVADMNEAIAISETYAPEHLSIQTDNARDLLPQLTRAGSVFVGHYTPESGGDYATGTNHVLPTYGYARNYSSLGLVDFYRRYTVQEASHDGLRQLAEAITTLADVEGLDAHKRAVTIRTETKSTESKL.

Tyr132, Gln194, and Asn217 together coordinate NAD(+). 3 residues coordinate substrate: Ser243, Gln265, and His268. Residues Gln265 and His268 each coordinate Zn(2+). Catalysis depends on proton acceptor residues Glu332 and His333. Substrate contacts are provided by His333, Asp366, Glu420, and His425. Residue Asp366 participates in Zn(2+) binding. Position 425 (His425) interacts with Zn(2+).

It belongs to the histidinol dehydrogenase family. Requires Zn(2+) as cofactor.

It carries out the reaction L-histidinol + 2 NAD(+) + H2O = L-histidine + 2 NADH + 3 H(+). Its pathway is amino-acid biosynthesis; L-histidine biosynthesis; L-histidine from 5-phospho-alpha-D-ribose 1-diphosphate: step 9/9. Catalyzes the sequential NAD-dependent oxidations of L-histidinol to L-histidinaldehyde and then to L-histidine. The polypeptide is Histidinol dehydrogenase (Idiomarina loihiensis (strain ATCC BAA-735 / DSM 15497 / L2-TR)).